Reading from the N-terminus, the 228-residue chain is Large ribosomal subunit protein bL25 (228 aa).

Residues 1–10 (MNSLDANTRN) show a composition bias toward polar residues. 2 disordered regions span residues 1 to 20 (MNSL…VRSL) and 187 to 228 (MKEP…EEKK). Residues 202-228 (EDGKEAAPAAEGDKKDDGEKKATEEKK) show a composition bias toward basic and acidic residues.

The protein belongs to the bacterial ribosomal protein bL25 family. CTC subfamily. Part of the 50S ribosomal subunit; part of the 5S rRNA/L5/L18/L25 subcomplex. Contacts the 5S rRNA. Binds to the 5S rRNA independently of L5 and L18.

Its function is as follows. This is one of the proteins that binds to the 5S RNA in the ribosome where it forms part of the central protuberance. This chain is Large ribosomal subunit protein bL25, found in Pelagibacter ubique (strain HTCC1062).